The primary structure comprises 244 residues: Tabinhibitin 8 (244 aa).

An N-terminal signal peptide occupies residues 1–23 (MTSILVSRFKISALTLQYATSDS). The SCP domain occupies 67-194 (YTGGGIIVLR…KTPLFFSSNC (128 aa)). The short motif at 143 to 145 (RGD) is the Cell attachment site element.

Belongs to the CRISP family. In terms of tissue distribution, expressed in salivary glands.

The protein resides in the secreted. Its function is as follows. Inhibits platelet aggregation induced by all agonists tested (ADP, arachidonic acid, the thromboxane A2 analog U46619, thrombin, and snake venom snaclecs (TMVA that activates platelet through GPIB, and stejnulxin that specifically acts through GPVI (GP6))). May act by competing with fibrinogen for binding to glycoprotein IIb/IIIa (ITGA2B/ITGB3). This Tabanus yao (Horsefly) protein is Tabinhibitin 8.